The primary structure comprises 247 residues: 3,4-dihydroxy-2-butanone 4-phosphate synthase (247 aa).

D-ribulose 5-phosphate is bound by residues 38–39 (RE), aspartate 43, 179–183 (RMGQT), and glutamate 203. A Mg(2+)-binding site is contributed by glutamate 39.

The protein belongs to the DHBP synthase family. Homodimer. Requires Mg(2+) as cofactor. The cofactor is Mn(2+).

It catalyses the reaction D-ribulose 5-phosphate = (2S)-2-hydroxy-3-oxobutyl phosphate + formate + H(+). It participates in cofactor biosynthesis; riboflavin biosynthesis; 2-hydroxy-3-oxobutyl phosphate from D-ribulose 5-phosphate: step 1/1. Functionally, catalyzes the conversion of D-ribulose 5-phosphate to formate and 3,4-dihydroxy-2-butanone 4-phosphate. This Methanosarcina acetivorans (strain ATCC 35395 / DSM 2834 / JCM 12185 / C2A) protein is 3,4-dihydroxy-2-butanone 4-phosphate synthase.